Consider the following 121-residue polypeptide: Histone H2B.6 (121 aa).

Residues 1-28 (MAPKAEKKPKVEKRVPGKEGETSKKKAK) are disordered. N6-acetyllysine is present on residues Lys-7 and Lys-13.

This sequence belongs to the histone H2B family. In terms of assembly, the nucleosome is a histone octamer containing two molecules each of H2A, H2B, H3 and H4 assembled in one H3-H4 heterotetramer and two H2A-H2B heterodimers. The octamer wraps approximately 147 bp of DNA. In terms of processing, can be acetylated to form H2BK6ac and H2BK33ac. Expressed preferentially in meristematic tissues.

The protein resides in the nucleus. Its subcellular location is the chromosome. Functionally, core component of nucleosome. Nucleosomes wrap and compact DNA into chromatin, limiting DNA accessibility to the cellular machineries which require DNA as a template. Histones thereby play a central role in transcription regulation, DNA repair, DNA replication and chromosomal stability. DNA accessibility is regulated via a complex set of post-translational modifications of histones, also called histone code, and nucleosome remodeling. This chain is Histone H2B.6 (TH123), found in Triticum aestivum (Wheat).